The chain runs to 446 residues: Phosphoglucosamine mutase (446 aa).

Catalysis depends on serine 99, which acts as the Phosphoserine intermediate. Residues serine 99, aspartate 242, aspartate 244, and aspartate 246 each contribute to the Mg(2+) site. Phosphoserine is present on serine 99.

Belongs to the phosphohexose mutase family. Mg(2+) serves as cofactor. Post-translationally, activated by phosphorylation.

The enzyme catalyses alpha-D-glucosamine 1-phosphate = D-glucosamine 6-phosphate. Catalyzes the conversion of glucosamine-6-phosphate to glucosamine-1-phosphate. This is Phosphoglucosamine mutase from Campylobacter curvus (strain 525.92).